The chain runs to 485 residues: Isocitrate dehydrogenase [NADP], chloroplastic/mitochondrial (485 aa).

Residues 1 to 65 (MLNKLTHGVF…VQFHRASAVR (65 aa)) constitute a chloroplast and mitochondrion transit peptide. Residues 147–149 (TIT) and arginine 154 each bind NADP(+). Substrate is bound at residue threonine 149. Residues 166–172 (SPNGTIR), arginine 181, and arginine 204 contribute to the substrate site. Mn(2+) is bound at residue aspartate 323. Lysine 331 contributes to the NADP(+) binding site. Aspartate 346 serves as a coordination point for Mn(2+). Residues 381-386 (GTVTRH) and asparagine 399 each bind NADP(+).

This sequence belongs to the isocitrate and isopropylmalate dehydrogenases family. Mg(2+) serves as cofactor. Requires Mn(2+) as cofactor.

The protein localises to the plastid. Its subcellular location is the chloroplast. The protein resides in the mitochondrion. The catalysed reaction is D-threo-isocitrate + NADP(+) = 2-oxoglutarate + CO2 + NADPH. Functionally, may be involved in response to oxidative stresses. In Arabidopsis thaliana (Mouse-ear cress), this protein is Isocitrate dehydrogenase [NADP], chloroplastic/mitochondrial.